The following is a 238-amino-acid chain: Ribonuclease PH (238 aa).

Residues R86 and G124–R126 contribute to the phosphate site.

This sequence belongs to the RNase PH family. As to quaternary structure, homohexameric ring arranged as a trimer of dimers.

The catalysed reaction is tRNA(n+1) + phosphate = tRNA(n) + a ribonucleoside 5'-diphosphate. Phosphorolytic 3'-5' exoribonuclease that plays an important role in tRNA 3'-end maturation. Removes nucleotide residues following the 3'-CCA terminus of tRNAs; can also add nucleotides to the ends of RNA molecules by using nucleoside diphosphates as substrates, but this may not be physiologically important. Probably plays a role in initiation of 16S rRNA degradation (leading to ribosome degradation) during starvation. The chain is Ribonuclease PH from Histophilus somni (strain 2336) (Haemophilus somnus).